The primary structure comprises 507 residues: Sugar transport protein 6 (507 aa).

At 1-20 the chain is on the cytoplasmic side; the sequence is MAVVVSNANAPAFEAKMTVY. A run of 12 helical transmembrane segments spans residues 21 to 41, 78 to 98, 115 to 135, 138 to 158, 165 to 185, 199 to 219, 280 to 300, 318 to 338, 345 to 365, 381 to 401, 418 to 438, and 447 to 467; these read VFICVMIAAVGGLIFGYDIGI, FLQLFTSSLYLAALVASFVAS, IFFLIGVGLTAGAVNLVMLII, LFLGFGVGFGNQAVPLFLSEI, GGLNIVFQLMVTIGILIANIV, IALGGAGIPAVILLFGSLLII, FIIGMLLQLFQQFTGINAIMF, LSAVITGSINVLATFVGIYLV, FLLLQSSVHMLICQLIIGIIL, LVVVIFVCVYVMGFAWSWGPL, GFAVAVSCNMFFTFVIAQAFL, and GIFFFFSGWIIVMGLFAFFFI. The Cytoplasmic portion of the chain corresponds to 468–507; the sequence is PETKGIAIDDMRESVWKPHWFWKRYMLPEDDHHDIEKRNA.

Belongs to the major facilitator superfamily. Sugar transporter (TC 2.A.1.1) family. Pollen specific.

It localises to the membrane. Its activity is regulated as follows. Inhibited by uncouplers such as 2,4-dinitrophenol and carbonyl cyanide-m-chlorophenyl-hydrazone. In terms of biological role, mediates an active uptake of hexoses, probably by sugar/hydrogen symport. Can transport glucose, 3-O-methylglucose, mannose, fructose and galactose, and, to a lower extent, xylose and ribulose. The protein is Sugar transport protein 6 (STP6) of Arabidopsis thaliana (Mouse-ear cress).